The sequence spans 154 residues: Deoxyuridine 5'-triphosphate nucleotidohydrolase (154 aa).

Substrate contacts are provided by residues 72–74 (RSG), N85, 89–91 (LID), and M99.

The protein belongs to the dUTPase family. Mg(2+) serves as cofactor.

It carries out the reaction dUTP + H2O = dUMP + diphosphate + H(+). It functions in the pathway pyrimidine metabolism; dUMP biosynthesis; dUMP from dCTP (dUTP route): step 2/2. This enzyme is involved in nucleotide metabolism: it produces dUMP, the immediate precursor of thymidine nucleotides and it decreases the intracellular concentration of dUTP so that uracil cannot be incorporated into DNA. The sequence is that of Deoxyuridine 5'-triphosphate nucleotidohydrolase from Psychrobacter arcticus (strain DSM 17307 / VKM B-2377 / 273-4).